A 549-amino-acid polypeptide reads, in one-letter code: Oxygen-dependent choline dehydrogenase (549 aa).

Residue 4–33 coordinates FAD; that stretch reads DFVIIGSGSAGSAMAYRLSENGRYSVIVIE. Residue H465 is the Proton acceptor of the active site.

It belongs to the GMC oxidoreductase family. The cofactor is FAD.

The catalysed reaction is choline + A = betaine aldehyde + AH2. It catalyses the reaction betaine aldehyde + NAD(+) + H2O = glycine betaine + NADH + 2 H(+). It functions in the pathway amine and polyamine biosynthesis; betaine biosynthesis via choline pathway; betaine aldehyde from choline (cytochrome c reductase route): step 1/1. In terms of biological role, involved in the biosynthesis of the osmoprotectant glycine betaine. Catalyzes the oxidation of choline to betaine aldehyde and betaine aldehyde to glycine betaine at the same rate. This is Oxygen-dependent choline dehydrogenase from Brucella suis biovar 1 (strain 1330).